Here is a 530-residue protein sequence, read N- to C-terminus: Chaperonin GroEL (530 aa).

ATP-binding positions include 30–33, Lys-51, 87–91, Gly-415, and Asp-495; these read TLGP and DGTTT.

The protein belongs to the chaperonin (HSP60) family. As to quaternary structure, forms a cylinder of 14 subunits composed of two heptameric rings stacked back-to-back. Interacts with the co-chaperonin GroES.

The protein resides in the cytoplasm. The catalysed reaction is ATP + H2O + a folded polypeptide = ADP + phosphate + an unfolded polypeptide.. Its function is as follows. Together with its co-chaperonin GroES, plays an essential role in assisting protein folding. The GroEL-GroES system forms a nano-cage that allows encapsulation of the non-native substrate proteins and provides a physical environment optimized to promote and accelerate protein folding. The polypeptide is Chaperonin GroEL (Carsonella ruddii (strain PV)).